Here is a 302-residue protein sequence, read N- to C-terminus: Sulfate adenylyltransferase subunit 2 (302 aa).

The protein belongs to the PAPS reductase family. CysD subfamily. Heterodimer composed of CysD, the smaller subunit, and CysN.

It carries out the reaction sulfate + ATP + H(+) = adenosine 5'-phosphosulfate + diphosphate. It functions in the pathway sulfur metabolism; hydrogen sulfide biosynthesis; sulfite from sulfate: step 1/3. In terms of biological role, with CysN forms the ATP sulfurylase (ATPS) that catalyzes the adenylation of sulfate producing adenosine 5'-phosphosulfate (APS) and diphosphate, the first enzymatic step in sulfur assimilation pathway. APS synthesis involves the formation of a high-energy phosphoric-sulfuric acid anhydride bond driven by GTP hydrolysis by CysN coupled to ATP hydrolysis by CysD. In Escherichia coli O7:K1 (strain IAI39 / ExPEC), this protein is Sulfate adenylyltransferase subunit 2.